Reading from the N-terminus, the 119-residue chain is Large ribosomal subunit protein uL22 (119 aa).

It belongs to the universal ribosomal protein uL22 family. In terms of assembly, part of the 50S ribosomal subunit.

In terms of biological role, this protein binds specifically to 23S rRNA; its binding is stimulated by other ribosomal proteins, e.g. L4, L17, and L20. It is important during the early stages of 50S assembly. It makes multiple contacts with different domains of the 23S rRNA in the assembled 50S subunit and ribosome. Its function is as follows. The globular domain of the protein is located near the polypeptide exit tunnel on the outside of the subunit, while an extended beta-hairpin is found that lines the wall of the exit tunnel in the center of the 70S ribosome. In Chlorobium chlorochromatii (strain CaD3), this protein is Large ribosomal subunit protein uL22.